Consider the following 152-residue polypeptide: Deoxyuridine 5'-triphosphate nucleotidohydrolase (152 aa).

Substrate contacts are provided by residues 71–73 (RSG), N84, 88–90 (LID), and M98.

It belongs to the dUTPase family. Mg(2+) is required as a cofactor.

The enzyme catalyses dUTP + H2O = dUMP + diphosphate + H(+). The protein operates within pyrimidine metabolism; dUMP biosynthesis; dUMP from dCTP (dUTP route): step 2/2. Its function is as follows. This enzyme is involved in nucleotide metabolism: it produces dUMP, the immediate precursor of thymidine nucleotides and it decreases the intracellular concentration of dUTP so that uracil cannot be incorporated into DNA. The chain is Deoxyuridine 5'-triphosphate nucleotidohydrolase from Salmonella arizonae (strain ATCC BAA-731 / CDC346-86 / RSK2980).